Here is a 380-residue protein sequence, read N- to C-terminus: Methylthioribose-1-phosphate isomerase (380 aa).

The active-site Proton donor is the D257.

Belongs to the eIF-2B alpha/beta/delta subunits family. MtnA subfamily.

The protein resides in the cytoplasm. It localises to the nucleus. It carries out the reaction 5-(methylsulfanyl)-alpha-D-ribose 1-phosphate = 5-(methylsulfanyl)-D-ribulose 1-phosphate. It functions in the pathway amino-acid biosynthesis; L-methionine biosynthesis via salvage pathway; L-methionine from S-methyl-5-thio-alpha-D-ribose 1-phosphate: step 1/6. Catalyzes the interconversion of methylthioribose-1-phosphate (MTR-1-P) into methylthioribulose-1-phosphate (MTRu-1-P). The chain is Methylthioribose-1-phosphate isomerase from Naegleria gruberi (Amoeba).